We begin with the raw amino-acid sequence, 105 residues long: Endoribonuclease MazF1 (105 aa).

This sequence belongs to the PemK/MazF family. In terms of assembly, forms a complex with cognate antitoxin MazE1.

In terms of biological role, toxic component of a type II toxin-antitoxin (TA) system. Acts as an endoribonuclease on single-strand RNA, cleaving between the first and second bases in the sequence UCGCU. Neutralized by coexpression with cognate antitoxin MazE1. The chain is Endoribonuclease MazF1 (mazF1) from Mycobacterium bovis (strain ATCC BAA-935 / AF2122/97).